The chain runs to 228 residues: MLLPIPDVLTPAQLSQLSERLDAADWADGRITAGHQSAQAKDNAQLPEDSPIAREASALVLDALSRSSTFFSAALPRRIYPPLFNRYSGGQSFGYHVDNAVRYDRSRGGADPVRTDVSATLFLSDPDSYDGGELVIEDTYGTQSVKLPAGHLVIYPGTSLHKVMPVTRGTRVASFFWIQSMLRNDAQRRLLFELDVSIRRLTQDTPGHPSLIQLTGVYHNLLRQWADV.

The Fe2OG dioxygenase domain maps to 78–180; it reads RIYPPLFNRY…RVASFFWIQS (103 aa). Fe cation contacts are provided by His96, Asp98, and His161. Arg171 contacts 2-oxoglutarate.

It depends on Fe(2+) as a cofactor. L-ascorbate is required as a cofactor.

The protein is PKHD-type hydroxylase XC_1340 of Xanthomonas campestris pv. campestris (strain 8004).